We begin with the raw amino-acid sequence, 140 residues long: Nucleoside diphosphate kinase (140 aa).

ATP is bound by residues K11, F59, R87, T93, R104, and N114. Catalysis depends on H117, which acts as the Pros-phosphohistidine intermediate.

It belongs to the NDK family. Homotetramer. Mg(2+) serves as cofactor.

Its subcellular location is the cytoplasm. The enzyme catalyses a 2'-deoxyribonucleoside 5'-diphosphate + ATP = a 2'-deoxyribonucleoside 5'-triphosphate + ADP. The catalysed reaction is a ribonucleoside 5'-diphosphate + ATP = a ribonucleoside 5'-triphosphate + ADP. Its function is as follows. Major role in the synthesis of nucleoside triphosphates other than ATP. The ATP gamma phosphate is transferred to the NDP beta phosphate via a ping-pong mechanism, using a phosphorylated active-site intermediate. This is Nucleoside diphosphate kinase from Rickettsia canadensis (strain McKiel).